The primary structure comprises 361 residues: Peptide chain release factor 1 (361 aa).

An N5-methylglutamine modification is found at glutamine 235.

Belongs to the prokaryotic/mitochondrial release factor family. In terms of processing, methylated by PrmC. Methylation increases the termination efficiency of RF1.

Its subcellular location is the cytoplasm. Functionally, peptide chain release factor 1 directs the termination of translation in response to the peptide chain termination codons UAG and UAA. This is Peptide chain release factor 1 from Xanthomonas campestris pv. campestris (strain 8004).